An 857-amino-acid chain; its full sequence is Autoinducer 2 sensor kinase/phosphatase LuxQ (857 aa).

2 helical membrane-spanning segments follow: residues 20-40 and 283-303; these read IIFLVLGLITIGIFIQSYYFS and LGLATSVVLMLMLSLAIRSWI. The Histidine kinase domain maps to 490–712; sequence KMSHEIRTPL…TFYLSIPVEK (223 aa). Phosphohistidine; by autocatalysis is present on H493. In terms of domain architecture, Response regulatory spans 735–850; it reads KVLLVEDNHT…ELHDELLHFK (116 aa). D784 carries the 4-aspartylphosphate modification.

As to quaternary structure, binds the complex formed by the autoinducer and LuxP.

It is found in the cell inner membrane. It catalyses the reaction ATP + protein L-histidine = ADP + protein N-phospho-L-histidine.. Functionally, at low cell density, in absence of autoinducer has a kinase activity, and autophosphorylates on a histidine residue. The phosphoryl group is then transferred to an aspartate residue in the response regulator domain. The phosphoryl group is transferred to LuxU, and ultimately to LuxO. At high cell density, in the presence of autoinducer, the kinase activity is inactivated, and the response regulator domain has a phosphatase activity. This Vibrio vulnificus (strain YJ016) protein is Autoinducer 2 sensor kinase/phosphatase LuxQ (luxQ).